A 317-amino-acid polypeptide reads, in one-letter code: Ribosomal RNA small subunit methyltransferase H (317 aa).

Residues 32 to 34 (GGH), Asp-51, Phe-78, Asp-99, and Gln-106 contribute to the S-adenosyl-L-methionine site.

Belongs to the methyltransferase superfamily. RsmH family.

It is found in the cytoplasm. The catalysed reaction is cytidine(1402) in 16S rRNA + S-adenosyl-L-methionine = N(4)-methylcytidine(1402) in 16S rRNA + S-adenosyl-L-homocysteine + H(+). In terms of biological role, specifically methylates the N4 position of cytidine in position 1402 (C1402) of 16S rRNA. The sequence is that of Ribosomal RNA small subunit methyltransferase H from Helicobacter hepaticus (strain ATCC 51449 / 3B1).